Reading from the N-terminus, the 196-residue chain is Phosphatidyl-N-methylethanolamine N-methyltransferase (196 aa).

Position 1 (Met1) is a topological domain, lumenal. The helical intramembrane region spans 2-28 (AIFEINNSFLICAVSIALNPLLWNIAA). Over 29 to 40 (RSEYNHKTLTKL) the chain is Lumenal. Residues 41 to 62 (ANGDSKKACYMLAACIFVAGIV) traverse the membrane as a helical segment. Residues 63–89 (RDLIYQNALKQQPTLGIFMNPLVQGIA) are Cytoplasmic-facing. The chain crosses the membrane as a helical span at residues 90–110 (KLIFCFGSVLVLSSMYKLGLV). 94 to 96 (CFG) is an S-adenosyl-L-methionine binding site. Residues 111-153 (GTYLGDYFGFLLPERVSGFPFNVNDNPMYNGSTLCFLSTALRY) are Lumenal-facing. Residues 154-174 (GKVAGLLLTLEVFFVYRIALK) traverse the membrane as a helical segment. Residues 175–196 (FEEPFTAKIYAARDSKQAKKSE) are Cytoplasmic-facing. 176–177 (EE) provides a ligand contact to S-adenosyl-L-methionine.

The protein belongs to the class VI-like SAM-binding methyltransferase superfamily. PEMT/PEM2 methyltransferase family.

The protein localises to the endoplasmic reticulum membrane. The protein resides in the mitochondrion membrane. The enzyme catalyses a 1,2-diacyl-sn-glycero-3-phospho-N-methylethanolamine + S-adenosyl-L-methionine = a 1,2-diacyl-sn-glycero-3-phospho-N,N-dimethylethanolamine + S-adenosyl-L-homocysteine + H(+). It carries out the reaction a 1,2-diacyl-sn-glycero-3-phospho-N,N-dimethylethanolamine + S-adenosyl-L-methionine = a 1,2-diacyl-sn-glycero-3-phosphocholine + S-adenosyl-L-homocysteine + H(+). The protein operates within phospholipid metabolism; phosphatidylcholine biosynthesis. Functionally, catalyzes the second two steps of the methylation pathway of phosphatidylcholine biosynthesis, the SAM-dependent methylation of phosphatidylmonomethylethanolamine (PMME) to phosphatidyldimethylethanolamine (PDME) and of PDME to phosphatidylcholine (PC). The sequence is that of Phosphatidyl-N-methylethanolamine N-methyltransferase from Schizosaccharomyces pombe (strain 972 / ATCC 24843) (Fission yeast).